Reading from the N-terminus, the 295-residue chain is Formamidopyrimidine-DNA glycosylase (295 aa).

The active-site Schiff-base intermediate with DNA is the Pro-2. The active-site Proton donor is Glu-3. The Proton donor; for beta-elimination activity role is filled by Lys-61. DNA is bound by residues His-95, Arg-117, and Arg-159. The FPG-type zinc-finger motif lies at 245–279 (HAYGREGEACERCGTPIRRVAFMNRSSYFCPVCQP). The active-site Proton donor; for delta-elimination activity is the Arg-269.

The protein belongs to the FPG family. In terms of assembly, monomer. Requires Zn(2+) as cofactor.

It carries out the reaction Hydrolysis of DNA containing ring-opened 7-methylguanine residues, releasing 2,6-diamino-4-hydroxy-5-(N-methyl)formamidopyrimidine.. The enzyme catalyses 2'-deoxyribonucleotide-(2'-deoxyribose 5'-phosphate)-2'-deoxyribonucleotide-DNA = a 3'-end 2'-deoxyribonucleotide-(2,3-dehydro-2,3-deoxyribose 5'-phosphate)-DNA + a 5'-end 5'-phospho-2'-deoxyribonucleoside-DNA + H(+). In terms of biological role, involved in base excision repair of DNA damaged by oxidation or by mutagenic agents. Acts as a DNA glycosylase that recognizes and removes damaged bases. Has a preference for oxidized purines, such as 7,8-dihydro-8-oxoguanine (8-oxoG). Has AP (apurinic/apyrimidinic) lyase activity and introduces nicks in the DNA strand. Cleaves the DNA backbone by beta-delta elimination to generate a single-strand break at the site of the removed base with both 3'- and 5'-phosphates. This chain is Formamidopyrimidine-DNA glycosylase, found in Nocardioides sp. (strain ATCC BAA-499 / JS614).